Consider the following 394-residue polypeptide: 3-amino-4-hydroxybenzoate 2-monooxygenase (394 aa).

Residues A16 and R109 each coordinate FAD. Residue Y214 is the Proton acceptor of the active site. D287 lines the FAD pocket.

Belongs to the 6-hydroxynicotinate 3-monooxygenase family. FAD is required as a cofactor.

It carries out the reaction 3-amino-4-hydroxybenzoate + NADPH + O2 + H(+) = 3-amino-2,4-dihydroxybenzoate + NADP(+) + H2O. It functions in the pathway antibiotic biosynthesis. Part of a gene cluster involved in the biosynthesis of cremeomycin, a light-sensitive o-diazoquinone with antibacterial and antiproliferative effects. Catalyzes the hydroxylation of 3-amino-4-hydroxybenzoate (3,4-AHBA) to 3-amino-2,4-dihydroxybenzoate (3,2,4-ADHBA). This is 3-amino-4-hydroxybenzoate 2-monooxygenase from Streptomyces cremeus.